We begin with the raw amino-acid sequence, 340 residues long: UDP-3-O-acylglucosamine N-acyltransferase (340 aa).

The Proton acceptor role is filled by H240.

This sequence belongs to the transferase hexapeptide repeat family. LpxD subfamily. Homotrimer.

The enzyme catalyses a UDP-3-O-[(3R)-3-hydroxyacyl]-alpha-D-glucosamine + a (3R)-hydroxyacyl-[ACP] = a UDP-2-N,3-O-bis[(3R)-3-hydroxyacyl]-alpha-D-glucosamine + holo-[ACP] + H(+). Its pathway is bacterial outer membrane biogenesis; LPS lipid A biosynthesis. In terms of biological role, catalyzes the N-acylation of UDP-3-O-acylglucosamine using 3-hydroxyacyl-ACP as the acyl donor. Is involved in the biosynthesis of lipid A, a phosphorylated glycolipid that anchors the lipopolysaccharide to the outer membrane of the cell. This is UDP-3-O-acylglucosamine N-acyltransferase from Pseudoalteromonas translucida (strain TAC 125).